The chain runs to 395 residues: Elongation factor Tu (395 aa).

The region spanning 6–205 (KPHINVGTIG…NALEKIDLPI (200 aa)) is the tr-type G domain. The G1 stretch occupies residues 15–22 (GHVDHGKT). 15-22 (GHVDHGKT) is a GTP binding site. Thr-22 provides a ligand contact to Mg(2+). A G2 region spans residues 59-63 (GITIS). Residues 80–83 (DCPG) are G3. GTP contacts are provided by residues 80–84 (DCPGH) and 135–138 (NKCD). Residues 135 to 138 (NKCD) form a G4 region. A G5 region spans residues 173 to 175 (SAV).

This sequence belongs to the TRAFAC class translation factor GTPase superfamily. Classic translation factor GTPase family. EF-Tu/EF-1A subfamily. In terms of assembly, monomer.

The protein localises to the cytoplasm. The enzyme catalyses GTP + H2O = GDP + phosphate + H(+). Its function is as follows. GTP hydrolase that promotes the GTP-dependent binding of aminoacyl-tRNA to the A-site of ribosomes during protein biosynthesis. The protein is Elongation factor Tu of Ehrlichia ruminantium (strain Gardel).